The sequence spans 218 residues: Riboflavin synthase (218 aa).

Lumazine-binding repeat units follow at residues 1–97 and 98–194; these read MFTG…LGGH and LVSG…EKLI. 2,4-dihydroxypteridine contacts are provided by residues 4-6, 48-50, 62-67, 101-103, Lys-136, 145-147, and 159-164; these read GII, CLT, DLSLET, GHV, SLT, and TIVPHT.

Homotrimer.

It catalyses the reaction 2 6,7-dimethyl-8-(1-D-ribityl)lumazine + H(+) = 5-amino-6-(D-ribitylamino)uracil + riboflavin. The protein operates within cofactor biosynthesis; riboflavin biosynthesis; riboflavin from 2-hydroxy-3-oxobutyl phosphate and 5-amino-6-(D-ribitylamino)uracil: step 2/2. Catalyzes the dismutation of two molecules of 6,7-dimethyl-8-ribityllumazine, resulting in the formation of riboflavin and 5-amino-6-(D-ribitylamino)uracil. The polypeptide is Riboflavin synthase (ribE) (Photobacterium leiognathi).